A 402-amino-acid chain; its full sequence is Homoserine O-acetyltransferase (402 aa).

Polar residues predominate over residues 1–17 (MDWQTTSADTAPSSFIT). The interval 1 to 39 (MDWQTTSADTAPSSFITEEQDRSLFGKPPASGAWKESDP) is disordered. The region spanning 78 to 388 (NAVLVLHALT…HFGHDGFLIE (311 aa)) is the AB hydrolase-1 domain. Serine 183 (nucleophile) is an active-site residue. Arginine 255 contributes to the substrate binding site. Active-site residues include aspartate 349 and histidine 382. Aspartate 383 contacts substrate.

It belongs to the AB hydrolase superfamily. MetX family. As to quaternary structure, homodimer.

It localises to the cytoplasm. It catalyses the reaction L-homoserine + acetyl-CoA = O-acetyl-L-homoserine + CoA. It participates in amino-acid biosynthesis; L-methionine biosynthesis via de novo pathway; O-acetyl-L-homoserine from L-homoserine: step 1/1. Transfers an acetyl group from acetyl-CoA to L-homoserine, forming acetyl-L-homoserine. This is Homoserine O-acetyltransferase from Leifsonia xyli subsp. xyli (strain CTCB07).